A 467-amino-acid chain; its full sequence is Probable lipase C1672.09 (467 aa).

Residues 1–17 (MIQLPFIQRLKWEEYMA) lie on the Cytoplasmic side of the membrane. A helical; Signal-anchor for type II membrane protein transmembrane segment spans residues 18 to 38 (LFLGFFFVIFEKLLSCLAFMI). Over 39–467 (HNTLGLFYRS…NHIAPRNKPI (429 aa)) the chain is Lumenal. A Phosphoserine modification is found at Ser66. One can recognise an AB hydrolase-1 domain in the interval 127–421 (PVVYCHHGLL…SYEHLDMIWA (295 aa)). Catalysis depends on Ser222, which acts as the Nucleophile. Residues Asn311 and Asn316 are each glycosylated (N-linked (GlcNAc...) asparagine). Catalysis depends on charge relay system residues Asp389 and His415. The segment covering 440-457 (HHPPEHEENDKENREIQK) has biased composition (basic and acidic residues). The disordered stretch occupies residues 440-467 (HHPPEHEENDKENREIQKNHIAPRNKPI).

It belongs to the AB hydrolase superfamily. Lipase family.

Its subcellular location is the cytoplasm. It localises to the membrane. Probable lipase. The protein is Probable lipase C1672.09 of Schizosaccharomyces pombe (strain 972 / ATCC 24843) (Fission yeast).